Consider the following 340-residue polypeptide: S-adenosylmethionine:tRNA ribosyltransferase-isomerase (340 aa).

Belongs to the QueA family. As to quaternary structure, monomer.

It is found in the cytoplasm. The catalysed reaction is 7-aminomethyl-7-carbaguanosine(34) in tRNA + S-adenosyl-L-methionine = epoxyqueuosine(34) in tRNA + adenine + L-methionine + 2 H(+). It participates in tRNA modification; tRNA-queuosine biosynthesis. In terms of biological role, transfers and isomerizes the ribose moiety from AdoMet to the 7-aminomethyl group of 7-deazaguanine (preQ1-tRNA) to give epoxyqueuosine (oQ-tRNA). The chain is S-adenosylmethionine:tRNA ribosyltransferase-isomerase from Chlorobaculum parvum (strain DSM 263 / NCIMB 8327) (Chlorobium vibrioforme subsp. thiosulfatophilum).